Reading from the N-terminus, the 100-residue chain is Carboxysome shell vertex protein CcmL (100 aa).

A BMV domain is found at 1 to 83; the sequence is MQIGRVRGTV…VDAVVIGIID (83 aa).

This sequence belongs to the CcmL/EutN family. CcmL subfamily. In terms of assembly, homopentamer. Interacts with full-length CcmM.

The protein resides in the carboxysome. Functionally, probably forms vertices in the carboxysome, a polyhedral inclusion where RuBisCO (ribulose bisphosphate carboxylase, rbcL-rbcS) is sequestered. Has been modeled to induce curvature upon insertion into an otherwise flat hexagonal molecular layer of CcmK subunits. This Gloeobacter violaceus (strain ATCC 29082 / PCC 7421) protein is Carboxysome shell vertex protein CcmL.